The sequence spans 454 residues: B-cell lymphoma 3 protein (454 aa).

A disordered region spans residues Met1–Ala50. A compositionally biased stretch (low complexity) spans Lys21–Pro31. The residue at position 41 (Ser41) is a Phosphoserine. ANK repeat units lie at residues Asp134–Arg163, Leu171–Ala200, His204–Leu235, Asp241–Ala270, Ser275–Ala304, Ser308–Leu337, and Lys338–Ser367. The segment at Gly360 to Ser454 is disordered. Polar residues predominate over residues Pro365–Thr381. Ser374 bears the Phosphoserine mark. The span at Ser382–Ser404 shows a compositional bias: low complexity. A phosphoserine; by GSK3 mark is found at Ser402 and Ser406. Pro residues predominate over residues Gln405–Pro418. The span at Leu432–Gly442 shows a compositional bias: low complexity. The segment covering Arg443–Ser454 has biased composition (pro residues).

Component of a complex consisting of the NF-kappa-B p52-p52 homodimer and BCL3. Component of a complex consisting of the NF-kappa-B p50-p50 homodimer and BCL3. Interacts with N4BP2, COPS5 and PIR. Interacts with CYLD. Polyubiquitinated. Ubiquitination via 'Lys-63'-linked ubiquitin chains is required for nuclear accumulation. Deubiquitinated by CYLD, which acts on 'Lys-63'-linked ubiquitin chains. Deubiquitination by CYLD prevents nuclear accumulation. Post-translationally, activated by phosphorylation.

The protein localises to the nucleus. It localises to the cytoplasm. The protein resides in the perinuclear region. Its function is as follows. Contributes to the regulation of transcriptional activation of NF-kappa-B target genes. In the cytoplasm, inhibits the nuclear translocation of the NF-kappa-B p50 subunit. In the nucleus, acts as transcriptional activator that promotes transcription of NF-kappa-B target genes. Contributes to the regulation of cell proliferation. The protein is B-cell lymphoma 3 protein (BCL3) of Homo sapiens (Human).